An 870-amino-acid polypeptide reads, in one-letter code: Probable coatomer subunit gamma (870 aa).

HEAT repeat units lie at residues 60 to 97, 99 to 133, 168 to 205, 278 to 315, 316 to 350, and 389 to 425; these read TEAT…VSDD, IIVT…TGML, EVVR…NDRL, SEIQ…AHPN, AVMS…GAES, and HTVM…ENPD.

It belongs to the COPG family. As to quaternary structure, oligomeric complex that consists of at least the alpha, beta, beta', gamma, delta, epsilon and zeta subunits.

The protein resides in the cytoplasm. The protein localises to the golgi apparatus membrane. It is found in the cytoplasmic vesicle. Its subcellular location is the COPI-coated vesicle membrane. Its function is as follows. The coatomer is a cytosolic protein complex that binds to dilysine motifs and reversibly associates with Golgi non-clathrin-coated vesicles, which further mediate biosynthetic protein transport from the ER, via the Golgi up to the trans Golgi network. Coatomer complex is required for budding from Golgi membranes, and is essential for the retrograde Golgi-to-ER transport of dilysine-tagged proteins. This Caenorhabditis elegans protein is Probable coatomer subunit gamma.